The sequence spans 336 residues: Heme A synthase (336 aa).

5 helical membrane-spanning segments follow: residues 5–25, 92–112, 117–137, 153–173, and 191–211; these read LTRW…VGGI, GRAT…KGII, ILSY…GWYM, LAFH…KLVK, and LIFS…GALV. His-255 contacts heme. A run of 3 helical transmembrane segments spans residues 257–277, 284–304, and 307–327; these read LGAY…LKVK, VAFY…ITLL, and VPII…SVVI. His-315 contributes to the heme binding site.

The protein belongs to the COX15/CtaA family. Type 2 subfamily. In terms of assembly, interacts with CtaB. It depends on heme b as a cofactor.

The protein resides in the cell membrane. It catalyses the reaction Fe(II)-heme o + 2 A + H2O = Fe(II)-heme a + 2 AH2. It participates in porphyrin-containing compound metabolism; heme A biosynthesis; heme A from heme O: step 1/1. In terms of biological role, catalyzes the conversion of heme O to heme A by two successive hydroxylations of the methyl group at C8. The first hydroxylation forms heme I, the second hydroxylation results in an unstable dihydroxymethyl group, which spontaneously dehydrates, resulting in the formyl group of heme A. In Rickettsia bellii (strain OSU 85-389), this protein is Heme A synthase.